We begin with the raw amino-acid sequence, 245 residues long: 3-deoxy-manno-octulosonate cytidylyltransferase (245 aa).

The protein belongs to the KdsB family.

Its subcellular location is the cytoplasm. It catalyses the reaction 3-deoxy-alpha-D-manno-oct-2-ulosonate + CTP = CMP-3-deoxy-beta-D-manno-octulosonate + diphosphate. It participates in nucleotide-sugar biosynthesis; CMP-3-deoxy-D-manno-octulosonate biosynthesis; CMP-3-deoxy-D-manno-octulosonate from 3-deoxy-D-manno-octulosonate and CTP: step 1/1. It functions in the pathway bacterial outer membrane biogenesis; lipopolysaccharide biosynthesis. In terms of biological role, activates KDO (a required 8-carbon sugar) for incorporation into bacterial lipopolysaccharide in Gram-negative bacteria. This chain is 3-deoxy-manno-octulosonate cytidylyltransferase, found in Desulfatibacillum aliphaticivorans.